The primary structure comprises 351 residues: Biotin synthase (351 aa).

The region spanning 48-265 (NKVRIHILDN…LCMFRLINPD (218 aa)) is the Radical SAM core domain. [4Fe-4S] cluster is bound by residues cysteine 63, cysteine 67, and cysteine 70. Residues cysteine 107, cysteine 139, cysteine 199, and arginine 269 each contribute to the [2Fe-2S] cluster site.

The protein belongs to the radical SAM superfamily. Biotin synthase family. Homodimer. The cofactor is [4Fe-4S] cluster. It depends on [2Fe-2S] cluster as a cofactor.

The enzyme catalyses (4R,5S)-dethiobiotin + (sulfur carrier)-SH + 2 reduced [2Fe-2S]-[ferredoxin] + 2 S-adenosyl-L-methionine = (sulfur carrier)-H + biotin + 2 5'-deoxyadenosine + 2 L-methionine + 2 oxidized [2Fe-2S]-[ferredoxin]. The protein operates within cofactor biosynthesis; biotin biosynthesis; biotin from 7,8-diaminononanoate: step 2/2. Its function is as follows. Catalyzes the conversion of dethiobiotin (DTB) to biotin by the insertion of a sulfur atom into dethiobiotin via a radical-based mechanism. In Leptospira interrogans serogroup Icterohaemorrhagiae serovar copenhageni (strain Fiocruz L1-130), this protein is Biotin synthase.